The chain runs to 461 residues: Lysosomal proton-coupled steroid conjugate and bile acid symporter SLC46A3 (461 aa).

Residues 1 to 25 (MKISFIEPAILLYAFAMTLTIPLTA) form the signal peptide. Residues 26–70 (QYVYRRIWEETGNYTFTSSSNVSECEQNKSSSTFAFQEEVQKKAS) are Extracellular-facing. Residues Asn38, Asn46, and Asn53 are each glycosylated (N-linked (GlcNAc...) asparagine). A helical membrane pass occupies residues 71 to 91 (LFSLQVEISGLIPGLVSTFML). Over 92–103 (LSSSDNHGRKLP) the chain is Cytoplasmic. The helical transmembrane segment at 104 to 124 (MVLSSLGSLGTNLWLCAMSYF) threads the bilayer. Residues 125-135 (DLPLQLLVAST) lie on the Extracellular side of the membrane. A helical membrane pass occupies residues 136-156 (FIGALFGNYTTFWGACFAYIV). The Cytoplasmic portion of the chain corresponds to 157-170 (DQEKEYKHRIIRIA). The chain crosses the membrane as a helical span at residues 171-191 (VLDFMLGVVTGLTGLSSGYFI). Topologically, residues 192–197 (RELGFA) are extracellular. A helical transmembrane segment spans residues 198-218 (WSYFIIAVVVLVNLAYILFFL). At 219–260 (SDPIKESSSQIVTMSCSESLKDLFYRTYMLFKNGSCKRRSLL) the chain is on the cytoplasmic side. The helical transmembrane segment at 261–281 (CLLIFTLVVYFFVVFGITPVF) threads the bilayer. Topologically, residues 282-301 (TLYELGPPLCWNEVYIGYGS) are extracellular. The helical transmembrane segment at 302–322 (ALGSLSFLSSFLGIWLFSYCL) threads the bilayer. Over 323 to 324 (KD) the chain is Cytoplasmic. The chain crosses the membrane as a helical span at residues 325–345 (IHIAYVGIFTTMVGMMLTAFT). Residues 346–347 (RT) are Extracellular-facing. Residues 348–368 (TLMMFLVRISFFFTIMPLSIL) form a helical membrane-spanning segment. The Cytoplasmic portion of the chain corresponds to 369 to 381 (RSMLSKVVHSTEQ). Residues 382-402 (GVLFACIAFLETLGGVTSTSA) traverse the membrane as a helical segment. Residues 403 to 415 (YNGIYSATVAWYP) are Extracellular-facing. The chain crosses the membrane as a helical span at residues 416-436 (GFVFLLSAGLLVLPAVSLCMV). The Cytoplasmic portion of the chain corresponds to 437 to 461 (KCIGWEEGSYTLLIHDEPSEHTSDS). The Tyrosine-based lysosomal-sorting motif signature appears at 446–449 (YTLL).

It belongs to the major facilitator superfamily. SLC46A family.

It is found in the lysosome membrane. It carries out the reaction estrone 3-sulfate(out) + n H(+)(out) = estrone 3-sulfate(in) + n H(+)(in). It catalyses the reaction 25-hydroxyvitamin D3 sulfate(out) + n H(+)(out) = 25-hydroxyvitamin D3 sulfate(in) + n H(+)(in). The catalysed reaction is cholate(out) + n H(+)(out) = cholate(in) + n H(+)(in). The enzyme catalyses glycocholate(out) + n H(+)(out) = glycocholate(in) + n H(+)(in). It carries out the reaction taurocholate(out) + n H(+)(out) = taurocholate(in) + n H(+)(in). It catalyses the reaction dehydroepiandrosterone 3-sulfate(out) + n H(+)(out) = dehydroepiandrosterone 3-sulfate(in) + n H(+)(in). The catalysed reaction is N-acetyl-D-muramoyl-L-alanyl-D-isoglutamine(out) + n H(+)(out) = N-acetyl-D-muramoyl-L-alanyl-D-isoglutamine(in) + n H(+)(in). The enzyme catalyses 2',3'-cGAMP(out) + n H(+)(out) = 2',3'-cGAMP(in) + n H(+)(in). Functionally, lysosomal proton-coupled steroid conjugate and bile acid transporter. Preferentially recognizes lipophilic steroid conjugates or bile acis as endogenous substrates and seems to mediate escape from lysosomes to the cytoplasm. Modulates hepatic cytosolic copper homeostasis, maybe acting as a lysosomal copper transporter and sequestering copper ions in the lysosome. Delivers pathogen-associated molecular patterns to cytosolic pattern recognition receptors as part of the innate immune response to microbes. Selectively transports bacterial muramyl dipeptide (MDP) into the cytosol for recognition by NOD2, triggering inflammatory responses. Likely acts as a redundant importer of cyclic GMP-AMP dinucleotides (cGAMPs) in monocyte and macrophage cell lineages. The transport mechanism, its electrogenicity and stoichiometry remain to be elucidated. The protein is Lysosomal proton-coupled steroid conjugate and bile acid symporter SLC46A3 (Slc46a3) of Rattus norvegicus (Rat).